A 306-amino-acid chain; its full sequence is Recombination-associated protein RdgC (306 aa).

Belongs to the RdgC family.

It is found in the cytoplasm. The protein localises to the nucleoid. In terms of biological role, may be involved in recombination. This chain is Recombination-associated protein RdgC, found in Pseudomonas putida (strain ATCC 47054 / DSM 6125 / CFBP 8728 / NCIMB 11950 / KT2440).